Reading from the N-terminus, the 637-residue chain is Serine protease Hayan (637 aa).

An N-terminal signal peptide occupies residues 1–26 (MAMISARRYFLLGLLVLTTSAYVTVG). The 49-residue stretch at 31–79 (PCQVRSDIPGICLSSSACENIRGYLKSGTLSTSQVPSCGFGAREEIICC) folds into the Clip domain. 3 disulfides stabilise this stretch: Cys-32/Cys-78, Cys-42/Cys-68, and Cys-48/Cys-79. Disordered stretches follow at residues 95-137 (FHAT…LDEN), 152-178 (KPQK…SMKM), 216-260 (QRSF…NNNN), and 286-365 (LQTT…EKER). Positions 125 to 136 (EGKRERESRLDE) are enriched in basic and acidic residues. Residues 234–244 (PLTTPRSRPQR) show a composition bias toward polar residues. Low complexity predominate over residues 245-260 (PNNSNFNTNPSPNNNN). The span at 306–320 (EPYRFRGQDRDKDTQ) shows a compositional bias: basic and acidic residues. Residues 321–332 (PQEPWNDVSNNL) show a composition bias toward polar residues. 4 disulfides stabilise this stretch: Cys-371/Cys-497, Cys-414/Cys-430, Cys-543/Cys-567, and Cys-578/Cys-609. The Peptidase S1 domain maps to 385-632 (ILDGERVDRG…FLDYIEGIVW (248 aa)). Catalysis depends on charge relay system residues His-429 and Asp-477. The active-site Charge relay system is Ser-582.

The protein belongs to the peptidase S1 family. CLIP subfamily.

The protein resides in the secreted. In terms of biological role, serine protease which, by converting prophenoloxidase 1 (PPO1) into its active form, plays an essential role in the melanization immune response to physical or septic wounding. May function in diverse PPO1-activating cascades that are negatively controlled by different serpin proteins; Spn27A and Spn28D in the hemolymph, and Spn28D and Spn77BA in the trachea. Also required in the systematic wound response by mediating the redox-dependent activation of the JNK cytoprotective cascade in neuronal tissues after integument wounding. The chain is Serine protease Hayan from Drosophila melanogaster (Fruit fly).